Reading from the N-terminus, the 170-residue chain is MALLPILEFPDPRLRTKAVRVGVAEVVSSSFQTLLDDMFETMYAAPGIGLAATQVNVHQRFMVVDVSEEKNAPMVFINPEIVTREGDQVFQEGCLSVPGIHADVTRALSIVVRFLDRHGDEQQLTAEGLLAVCIQHEMDHLDGKLFIDYLSPLKRDMVRRKLEKQRRRAS.

Fe cation is bound by residues Cys94 and His136. Glu137 is an active-site residue. Residue His140 participates in Fe cation binding.

The protein belongs to the polypeptide deformylase family. Fe(2+) is required as a cofactor.

The catalysed reaction is N-terminal N-formyl-L-methionyl-[peptide] + H2O = N-terminal L-methionyl-[peptide] + formate. In terms of biological role, removes the formyl group from the N-terminal Met of newly synthesized proteins. Requires at least a dipeptide for an efficient rate of reaction. N-terminal L-methionine is a prerequisite for activity but the enzyme has broad specificity at other positions. The sequence is that of Peptide deformylase from Xylella fastidiosa (strain M12).